Reading from the N-terminus, the 190-residue chain is Elongation factor P 2 (190 aa).

It belongs to the elongation factor P family.

It is found in the cytoplasm. It participates in protein biosynthesis; polypeptide chain elongation. Its function is as follows. Involved in peptide bond synthesis. Stimulates efficient translation and peptide-bond synthesis on native or reconstituted 70S ribosomes in vitro. Probably functions indirectly by altering the affinity of the ribosome for aminoacyl-tRNA, thus increasing their reactivity as acceptors for peptidyl transferase. The polypeptide is Elongation factor P 2 (efp2) (Chlamydia caviae (strain ATCC VR-813 / DSM 19441 / 03DC25 / GPIC) (Chlamydophila caviae)).